The chain runs to 190 residues: Putative manganese efflux pump MntP (190 aa).

A run of 6 helical transmembrane segments spans residues Pro-3–Gly-23, Leu-41–Ala-61, Asp-69–Ile-89, Phe-105–Gly-125, Ile-133–Met-153, and Ile-168–Ala-188.

The protein belongs to the MntP (TC 9.B.29) family.

The protein localises to the cell inner membrane. Its function is as follows. Probably functions as a manganese efflux pump. The polypeptide is Putative manganese efflux pump MntP (Pseudomonas syringae pv. syringae (strain B728a)).